A 1006-amino-acid chain; its full sequence is DNA polymerase (1006 aa).

This sequence belongs to the DNA polymerase type-B family. Interacts with OPG148. Component of the Uracil-DNA glycosylase(UDG)-OPG148-polymerase complex; OPG148 and OPG116/UDG form a heterodimeric processivity factor that associates with OPG071 to form the processive polymerase holoenzyme.

The enzyme catalyses DNA(n) + a 2'-deoxyribonucleoside 5'-triphosphate = DNA(n+1) + diphosphate. Functionally, catalyzes DNA synthesis. Acquires processivity by associating with a heterodimeric processivity factor comprised of the viral OPG148 and OPG116 proteins, thereby forming the DNA polymerase holoenzyme. Displays 3'- to 5' exonuclease activity. Might participate in viral DNA recombination. Does not perform OPG116/D4synthesis across an abasic site. The sequence is that of DNA polymerase (OPG071) from Monkeypox virus.